The sequence spans 769 residues: Homoaconitase, mitochondrial (769 aa).

The N-terminal 28 residues, 1–28 (MQSRLLPSGPGRRWISLRVPNTPQRRAF), are a transit peptide targeting the mitochondrion. C391, C460, and C463 together coordinate [4Fe-4S] cluster.

Belongs to the aconitase/IPM isomerase family. The cofactor is [4Fe-4S] cluster.

The protein localises to the mitochondrion. The catalysed reaction is (2R,3S)-homoisocitrate = cis-homoaconitate + H2O. It functions in the pathway amino-acid biosynthesis; L-lysine biosynthesis via AAA pathway; L-alpha-aminoadipate from 2-oxoglutarate: step 3/5. Functionally, catalyzes the reversible hydration of cis-homoaconitate to (2R,3S)-homoisocitrate, a step in the alpha-aminoadipate pathway for lysine biosynthesis. The chain is Homoaconitase, mitochondrial (lysA) from Aspergillus niger (strain ATCC MYA-4892 / CBS 513.88 / FGSC A1513).